The following is a 481-amino-acid chain: Cysteine protease atg-4.1 (481 aa).

The Nucleophile role is filled by cysteine 112. Residues aspartate 313 and histidine 315 contribute to the active site. A disordered region spans residues aspartate 462–alanine 481.

It belongs to the peptidase C54 family.

The protein localises to the cytoplasm. It catalyses the reaction [protein]-C-terminal L-amino acid-glycyl-phosphatidylethanolamide + H2O = [protein]-C-terminal L-amino acid-glycine + a 1,2-diacyl-sn-glycero-3-phosphoethanolamine. Its function is as follows. Cysteine protease required for autophagy. Cleaves the C-terminal amino acid of ATG8 family proteins lgg-1, to reveal a C-terminal glycine. Exposure of the glycine at the C-terminus is essential for ATG8 proteins conjugation to phosphatidylethanolamine (PE) and insertion to membranes, which is necessary for autophagy. Its cleavage activity is functionally redundant to atg-4.2, but it cleaves lgg-1 precursors more efficiently than atg-4.2. Acts redundantly with atg-4.2 to promote the lgg-1 delipidation to release the protein from membranes, which facilitates multiple events during macroautophagy. Unlike atg-4.2 does not seem to be required for autophagosome maturation. This chain is Cysteine protease atg-4.1, found in Caenorhabditis elegans.